A 261-amino-acid polypeptide reads, in one-letter code: Aquaporin-8 (261 aa).

The Cytoplasmic portion of the chain corresponds to 1-36 (MSGEQTPMCSMDLPEVKVKTSMAGRCRVFWYEQYVQ). The helical transmembrane segment at 37 to 57 (PCIVELVGSALFIFIGCLSVI) threads the bilayer. The residue at position 53 (C53) is a Cysteine persulfide. C53 carries the cysteine sulfenic acid (-SOH) modification. Over 58 to 84 (ENSPNTGLLQPALAHGLALGLIIATLG) the chain is Extracellular. The helical transmembrane segment at 85 to 105 (NISGGHFNPAVSLAVTVIGGL) threads the bilayer. The NPA 1 signature appears at 92–94 (NPA). Residues 106-107 (KT) lie on the Cytoplasmic side of the membrane. Residues 108 to 128 (MLLIPYWISQLFGGLIGAALA) form a helical membrane-spanning segment. Residues 129-156 (KVVSPEERFWNASGAAFAIVQEQEQVAE) lie on the Extracellular side of the membrane. An N-linked (GlcNAc...) asparagine glycan is attached at N139. The helical transmembrane segment at 157 to 177 (ALGIEIILTMLLVLAVCMGAV) threads the bilayer. At 178-183 (NEKTMG) the chain is on the cytoplasmic side. The chain crosses the membrane as a helical span at residues 184–204 (PLAPFSIGFSVIVDILAGGSI). At 205–228 (SGACMNPARAFGPAVMAGYWDFHW) the chain is on the extracellular side. The short motif at 210-212 (NPA) is the NPA 2 element. A helical membrane pass occupies residues 229-249 (IYWLGPLLAGLFVGLLIRLLI). Over 250–261 (GDEKTRLILKSR) the chain is Cytoplasmic.

It belongs to the MIP/aquaporin (TC 1.A.8) family. Post-translationally, sulfenylation at Cys-53(C53-SOH) when hydrogen peroxide flows through the AQP8 channel, making it susceptible to hydrogen sulfide produced by CBS. In terms of processing, persulfidation at Cys-53 is required to gate AQP8 channel; under stress condition, hydrogen peroxide accumulates in the cell leading to CBS activation that produces hydrogen sulfide inducing persulfidation of oxidized Cys-53 (C53-SOH). N-glycosylated. As to expression, expressed in placenta. Highly expressed in the epithelial layer of gall-bladders. Expressed in heart, kidney, submandibular gland, liver, small intestine, colon, testes, and epididymis. In testes, expressed in spermatogenic cells.

The protein resides in the cell membrane. Its subcellular location is the mitochondrion inner membrane. The protein localises to the apical cell membrane. It is found in the basolateral cell membrane. It localises to the smooth endoplasmic reticulum membrane. It carries out the reaction H2O(in) = H2O(out). The enzyme catalyses urea(in) = urea(out). The catalysed reaction is NH4(+)(in) = NH4(+)(out). It catalyses the reaction H2O2(out) = H2O2(in). It carries out the reaction formamide(out) = formamide(in). The enzyme catalyses methylamine(out) = methylamine(in). Reversibly gated by a two-step sulfenylation-persulfidation process in cells undergoing diverse stresses. Channel that allows the facilitated permeation of water and uncharged molecules, such as hydrogen peroxide and the neutral form of ammonia (NH3), through cellular membranes such as plasma membrane, inner mitochondrial membrane and endoplasmic reticulum membrane of several tissues. The transport of ammonia neutral form induces a parallel transport of proton, at alkaline pH when the concentration of ammonia is high. However, it is unclear whether the transport of proton takes place via the aquaporin or via an endogenous pathway. Also, may transport ammonia analogs such as formamide and methylamine, a transport favourited at basic pH due to the increase of unprotonated (neutral) form, which is expected to favor diffusion. In vitro, may be also permeable to urea but not to glycerol. Does not transport urea or glycerol. The water transport mechanism is mercury- and copper-sensitive and passive in response to osmotic driving forces. At the canicular plasma membrane, mediates the osmotic transport of water toward the bile canaliculus and facilitates the cAMP-induced bile canalicular water secretion, a process involved in bile formation. In addition, mediates the hydrogen peroxide release from hepatocyte mitochondria that modulates the SREBF2-mediated cholesterol synthesis and facilitates the mitochondrial ammonia uptake which is metabolized into urea, mainly under glucagon stimulation. In B cells, transports the CYBB-generated hydrogen peroxide from the external leaflet of the plasma membrane to the cytosol to promote B cell activation and differentiation for signal amplification. In the small intestine and colon system, mediates water transport through mitochondria and apical membrane of epithelial cells. May play an important role in the adaptive response of proximal tubule cells to acidosis possibly facilitating mitochondrial ammonia transport. The polypeptide is Aquaporin-8 (Mus musculus (Mouse)).